The primary structure comprises 115 residues: MSGEPAPVSVVPPPGEVEAGSGVHIVVEYCKPCGFEATYLELASAVKEEYPGIEIESRLGGTGAFEIEINGQLVFSKLENGGFPYEKDLMEAIRRASNGEPVEKITNSRPPCVIL.

N-acetylserine is present on Ser2. Cys30 and Cys33 are oxidised to a cystine. Cys112 is lipidated: S-geranylgeranyl cysteine. A propeptide spans 113–115 (removed in mature form); sequence VIL.

The protein belongs to the SelWTH family. Interacts with GPX1. Isoprenylation facilitates association with the plasma membrane and enhances the migratory phenotype of cells by inducing increased filopodia formation. As to expression, widely expressed with highest levels in kidney followed by brain and testis.

Its subcellular location is the cytoplasm. The protein resides in the cytosol. It is found in the cell membrane. Increases cell migration by inducing filopodia formation at the leading edge of migrating cells. Plays a role in regulation of apoptosis, possibly through control of CASP3. May be involved in a redox-related process. The chain is Migration and invasion enhancer 1 (Mien1) from Mus musculus (Mouse).